A 294-amino-acid polypeptide reads, in one-letter code: Farnesyl diphosphate synthase (294 aa).

3 residues coordinate isopentenyl diphosphate: Lys45, Arg48, and His77. The Mg(2+) site is built by Asp84 and Asp90. Arg95 contributes to the (2E)-geranyl diphosphate binding site. Residue Arg96 participates in isopentenyl diphosphate binding. Residues Lys181, Thr182, and Gln220 each coordinate (2E)-geranyl diphosphate.

This sequence belongs to the FPP/GGPP synthase family. Mg(2+) serves as cofactor.

The protein localises to the cytoplasm. The catalysed reaction is isopentenyl diphosphate + (2E)-geranyl diphosphate = (2E,6E)-farnesyl diphosphate + diphosphate. This chain is Farnesyl diphosphate synthase (ispA), found in Buchnera aphidicola subsp. Schizaphis graminum (strain Sg).